We begin with the raw amino-acid sequence, 409 residues long: Single Ig IL-1-related receptor (409 aa).

At 1 to 117 (MAGVCDMAPN…TLWRAGPAGH (117 aa)) the chain is on the extracellular side. The 100-residue stretch at 9-108 (PNFLSPSEDQ…VWNVSSHSFT (100 aa)) folds into the Ig-like C2-type domain. 5 N-linked (GlcNAc...) asparagine glycosylation sites follow: Asn31, Asn58, Asn73, Asn85, and Asn101. A disulfide bond links Cys32 and Cys97. The chain crosses the membrane as a helical; Signal-anchor for type III membrane protein span at residues 118 to 138 (VAAVLASLLVLVVLLLVALLY). Residues 139–409 (VKCRLNMLLW…FYCLVSEDDV (271 aa)) are Cytoplasmic-facing. Positions 162 to 306 (KLYDAYVSYS…DFWKELQLAL (145 aa)) constitute a TIR domain. The residue at position 382 (Ser382) is a Phosphoserine.

It belongs to the interleukin-1 receptor family. Interacts with IL1R1, IRAK1, TLR4, TLR5, TLR9 and TRAF6. Upon IL-1 stimulation found in a complex at least composed of IL1R1, SIGIRR, MYD88, IRAK1 and TRAF6. Upon stimulation with LPC found in a complex at least composed of TLR4, SIG1IR, MYD88, IRAK1 and TRAF6. Interacts with PALM3. Expressed at high levels in kidney, and at moderate levels in colon, small intestine, lung, spleen and liver. Not expressed in brain and muscle. Expressed at high levels in epithelial cells, at moderate levels in splenocytes, and at low or undetectable levels in fibroblasts or endothelial cells. Expressed in mucosal and dendritic cells.

The protein resides in the membrane. Acts as a negative regulator of the Toll-like and IL-1R receptor signaling pathways. Attenuates the recruitment of receptor-proximal signaling components to the TLR4 receptor, probably through an TIR-TIR domain interaction with TLR4. Through its extracellular domain interferes with the heterodimerization of Il1R1 and IL1RAP. This chain is Single Ig IL-1-related receptor (Sigirr), found in Mus musculus (Mouse).